Here is a 567-residue protein sequence, read N- to C-terminus: Proline--tRNA ligase (567 aa).

This sequence belongs to the class-II aminoacyl-tRNA synthetase family. ProS type 1 subfamily. As to quaternary structure, homodimer.

The protein resides in the cytoplasm. The catalysed reaction is tRNA(Pro) + L-proline + ATP = L-prolyl-tRNA(Pro) + AMP + diphosphate. Its function is as follows. Catalyzes the attachment of proline to tRNA(Pro) in a two-step reaction: proline is first activated by ATP to form Pro-AMP and then transferred to the acceptor end of tRNA(Pro). As ProRS can inadvertently accommodate and process non-cognate amino acids such as alanine and cysteine, to avoid such errors it has two additional distinct editing activities against alanine. One activity is designated as 'pretransfer' editing and involves the tRNA(Pro)-independent hydrolysis of activated Ala-AMP. The other activity is designated 'posttransfer' editing and involves deacylation of mischarged Ala-tRNA(Pro). The misacylated Cys-tRNA(Pro) is not edited by ProRS. This is Proline--tRNA ligase from Stenotrophomonas maltophilia (strain K279a).